A 152-amino-acid polypeptide reads, in one-letter code: SsrA-binding protein (152 aa).

Positions 130 to 152 (HDKRQDLKQRQDKREMERAMKQR) are disordered. The segment covering 132–152 (KRQDLKQRQDKREMERAMKQR) has biased composition (basic and acidic residues).

The protein belongs to the SmpB family.

Its subcellular location is the cytoplasm. Functionally, required for rescue of stalled ribosomes mediated by trans-translation. Binds to transfer-messenger RNA (tmRNA), required for stable association of tmRNA with ribosomes. tmRNA and SmpB together mimic tRNA shape, replacing the anticodon stem-loop with SmpB. tmRNA is encoded by the ssrA gene; the 2 termini fold to resemble tRNA(Ala) and it encodes a 'tag peptide', a short internal open reading frame. During trans-translation Ala-aminoacylated tmRNA acts like a tRNA, entering the A-site of stalled ribosomes, displacing the stalled mRNA. The ribosome then switches to translate the ORF on the tmRNA; the nascent peptide is terminated with the 'tag peptide' encoded by the tmRNA and targeted for degradation. The ribosome is freed to recommence translation, which seems to be the essential function of trans-translation. In Thermosynechococcus vestitus (strain NIES-2133 / IAM M-273 / BP-1), this protein is SsrA-binding protein.